The following is a 310-amino-acid chain: N-acetylmuramic acid 6-phosphate etherase (310 aa).

In terms of domain architecture, SIS spans 64-227 (ITSRLKSNGR…STSVMIKLGK (164 aa)). Glu92 (proton donor) is an active-site residue. Residue Glu123 is part of the active site.

The protein belongs to the GCKR-like family. MurNAc-6-P etherase subfamily. Homodimer.

It catalyses the reaction N-acetyl-D-muramate 6-phosphate + H2O = N-acetyl-D-glucosamine 6-phosphate + (R)-lactate. It participates in amino-sugar metabolism; N-acetylmuramate degradation. Its function is as follows. Specifically catalyzes the cleavage of the D-lactyl ether substituent of MurNAc 6-phosphate, producing GlcNAc 6-phosphate and D-lactate. This is N-acetylmuramic acid 6-phosphate etherase from Prochlorococcus marinus (strain NATL2A).